A 425-amino-acid polypeptide reads, in one-letter code: NAC transcription factor ONAC010 (425 aa).

A compositionally biased stretch (polar residues) spans 1-10 (MESPDSSSGS). Positions 1 to 34 (MESPDSSSGSAPPRVLRRQQQQPGSAPELPPGFR) are disordered. Low complexity predominate over residues 12-23 (PPRVLRRQQQQP). The region spanning 29 to 200 (LPPGFRFHPT…DWVLCRIYKK (172 aa)) is the NAC domain. Residues 129-206 (VGVKKALVFY…IYKKTNKAGA (78 aa)) mediate DNA binding.

Its subcellular location is the nucleus. Functionally, transcription factor of the NAC family associated with male fertility. This is NAC transcription factor ONAC010 (ONAC010) from Oryza sativa subsp. indica (Rice).